The following is a 188-amino-acid chain: MEDTAIIRSPQPSINAPGFHLPPTDSQQSSAIELPFQFQATTFGATETAAQISLASANAITKLASLYRHVRLTQCAATITPTAAAIANPLTVNIVWVSDNSTAKPTEILNVFGGSSYTFGGALNATKPLTIPLPMNSVNCMLKDSVLYTDCPKLLAYSAAPSSPSKTPTATIQIHGKLRLSSPLLQAN.

It belongs to the tymoviruses capsid protein family.

The protein resides in the virion. In terms of biological role, self-assembles to form a T=3 icosahedral capsid composed of 180 copies of the capsid protein. The capsid encapsulates the single-stranded RNA genome. This chain is Capsid protein, found in Solanum lycopersicum (Tomato).